Consider the following 1501-residue polypeptide: EF-hand calcium-binding domain-containing protein 6 (1501 aa).

Residues Arg18 to Thr47 are disordered. Residues Arg35–Thr47 show a composition bias toward polar residues. 7 EF-hand domains span residues Asp70–Pro105, Lys172–Lys207, Lys297–Gln332, Asp403–Lys438, Leu439–Met474, Arg504–Phe539, and Gln634–Pro669. Residues Glu699–Lys718 are disordered. EF-hand domains are found at residues Glu741–Asn776, Asn847–Pro882, Leu883–Pro918, Asp964–Ser999, Ser1069–Lys1104, Ser1176–Ile1211, and Leu1212–Ala1247. Asp754, Asp756, Asp758, and Asp765 together coordinate Ca(2+). Phosphothreonine is present on Thr884. Residues Ala1246–Leu1307 form a disordered region. Polar residues-rich tracts occupy residues Gly1270 to Thr1279 and Ser1286 to Ile1301. The residue at position 1290 (Ser1290) is a Phosphoserine. A phosphothreonine mark is found at Thr1294 and Thr1304. Residues Gly1303–Gln1501 are interaction with PARK7. 3 consecutive EF-hand domains span residues Ile1359 to Ala1394, His1434 to Asn1469, and Leu1470 to Gln1501. The segment at Asn1407–Gln1501 is interaction with AR.

In terms of assembly, microtubule inner protein component of sperm flagellar doublet microtubules. Binds PARK7. Part of a ternary complex containing PARK7, EFCAB6/DJBP and AR. Specifically expressed in the testis.

It is found in the nucleus. Its subcellular location is the cytoplasm. The protein localises to the cytoskeleton. The protein resides in the flagellum axoneme. In terms of biological role, negatively regulates the androgen receptor by recruiting histone deacetylase complex, and protein DJ-1 antagonizes this inhibition by abrogation of this complex. Microtubule inner protein (MIP) part of the dynein-decorated doublet microtubules (DMTs) in cilia axoneme, which is required for motile cilia beating. In Homo sapiens (Human), this protein is EF-hand calcium-binding domain-containing protein 6.